Consider the following 338-residue polypeptide: Beta-ketoacyl-[acyl-carrier-protein] synthase III 2 (338 aa).

Catalysis depends on residues cysteine 119 and histidine 255. Residues 256 to 260 form an ACP-binding region; sequence QANIR. Residue asparagine 285 is part of the active site.

Belongs to the thiolase-like superfamily. FabH family. As to quaternary structure, homodimer.

It localises to the cytoplasm. It carries out the reaction malonyl-[ACP] + acetyl-CoA + H(+) = 3-oxobutanoyl-[ACP] + CO2 + CoA. Its pathway is lipid metabolism; fatty acid biosynthesis. Its function is as follows. Catalyzes the condensation reaction of fatty acid synthesis by the addition to an acyl acceptor of two carbons from malonyl-ACP. Catalyzes the first condensation reaction which initiates fatty acid synthesis and may therefore play a role in governing the total rate of fatty acid production. Possesses both acetoacetyl-ACP synthase and acetyl transacylase activities. Its substrate specificity determines the biosynthesis of branched-chain and/or straight-chain of fatty acids. The protein is Beta-ketoacyl-[acyl-carrier-protein] synthase III 2 of Deinococcus radiodurans (strain ATCC 13939 / DSM 20539 / JCM 16871 / CCUG 27074 / LMG 4051 / NBRC 15346 / NCIMB 9279 / VKM B-1422 / R1).